Reading from the N-terminus, the 68-residue chain is MSLEVRVTELESRLAFQEDTIQALNDELVEQHKRIERLQLQLSALARRQEELQGQVGIVEDEAPPPHY.

This sequence belongs to the SlyX family.

This is Protein SlyX homolog from Ectopseudomonas mendocina (strain ymp) (Pseudomonas mendocina).